Reading from the N-terminus, the 239-residue chain is Ion-translocating oxidoreductase complex subunit E (239 aa).

5 helical membrane passes run 41 to 61, 71 to 91, 95 to 115, 130 to 150, and 184 to 204; these read LGLGLATLLVLVCSNAAVSLV, LPAFVMIIAALTTCIELLMQA, ELYQILGIFIPLITTNCVILG, SFDGLLTGLGFALVLLVLGGL, and GFLLAILPPGAFIMLGLLIAL.

Belongs to the NqrDE/RnfAE family. As to quaternary structure, the complex is composed of six subunits: RnfA, RnfB, RnfC, RnfD, RnfE and RnfG.

Its subcellular location is the cell inner membrane. Functionally, part of a membrane-bound complex that couples electron transfer with translocation of ions across the membrane. The sequence is that of Ion-translocating oxidoreductase complex subunit E from Pseudomonas paraeruginosa (strain DSM 24068 / PA7) (Pseudomonas aeruginosa (strain PA7)).